Reading from the N-terminus, the 32-residue chain is DAPSTTPPQDXEKKAAEFQKTFTEQXNQLANK.

The interval Asp-1 to Lys-32 is disordered. The segment covering Lys-20–Lys-32 has biased composition (polar residues).

This sequence belongs to the insect apolipophorin-3 family. As to quaternary structure, equilibrium between a soluble monomer and a bound lipoprotein form. Apolipophorin-3 associates with lipophorin during lipid loading until each particle contains 9 or 14 molecules of apolipophorin-3. As to expression, hemolymph.

The protein resides in the secreted. Its function is as follows. Assists in the loading of diacylglycerol, generated from triacylglycerol stores in the fat body through the action of adipokinetic hormone, into lipophorin, the hemolymph lipoprotein. It increases the lipid carrying capacity of lipophorin by covering the expanding hydrophobic surface resulting from diacylglycerol uptake. It thus plays a critical role in the transport of lipids during flight in several species of insects. In Diatraea grandiosella (Southwestern corn borer), this protein is Apolipophorin-3.